The following is a 557-amino-acid chain: ETHYLENE INSENSITIVE 3-like 5 protein (557 aa).

Disordered stretches follow at residues 1–23 and 61–96; these read MVEV…DLEE and NLNS…RKKM. Residues 64–82 show a composition bias toward low complexity; that stretch reads SVISSPSSSTSASSSSSSS. A coiled-coil region spans residues 270-311; that stretch reads ERVRRLARQSKCLQDKMMAKETDTWSRVLNQEEARLNRLKIS.

Belongs to the EIN3 family.

The protein localises to the nucleus. Its function is as follows. Putative transcription factor that may be involved in the ethylene response pathway. The sequence is that of ETHYLENE INSENSITIVE 3-like 5 protein (EIL5) from Arabidopsis thaliana (Mouse-ear cress).